The sequence spans 20 residues: Fibrinogen (20 aa).

Positions 1-20 (LHSNLEYQYRYSGRVASGIP) constitute a Vitellogenin domain.

In terms of tissue distribution, secreted into the hemolymph.

It localises to the secreted. The protein localises to the extracellular space. Its function is as follows. Involved in lipid transport. Plays a role in hemolymph clotting. May be involved in wound healing in the cuticle. The sequence is that of Fibrinogen from Pacifastacus leniusculus (Signal crayfish).